We begin with the raw amino-acid sequence, 138 residues long: Homeobox protein HD-11 (138 aa).

The segment at residues 30 to 89 is a DNA-binding region (homeobox); sequence CTGKQMRKTRLQTCVLNRIFEISRFPSSKTIVDLALLINVHPKSIQKWFQNTRQAIRKKG.

The protein localises to the nucleus. The polypeptide is Homeobox protein HD-11 (HD-11) (Encephalitozoon cuniculi (strain GB-M1) (Microsporidian parasite)).